A 921-amino-acid chain; its full sequence is MASKGTEGGHGGVERKEQQQQRGYQLPRDSRGSLEVFNPSSASSFRTAAAAPKSASPFLAIPDREEDNVVAQQRAAEWGLVLQTDHHTGLPQGVSARPSSGSARTSSEDNPQQQQSAAAIPRVSEELRAALSVFQQTFVVSDATHPNHPIMYASAGFFNMTGYTSKEVVGRNCRFLQGSGTDPHEIDKIRQSLANGSNYCGRILNYKKDGTPFWNLLTIAPIKDEDGRLLKFIGMQVEVSKYTEGKKDTVVRPNGLSESLIKYDARQKDHARSSVSELLLALKNPRSLSESSNNTLKRKSQESLSMSMSEVPSKRSSESGSRRNSRSGTRSSLQKINEVPDQVNRTRKSGLRAFMGFLGMGHGSVEKNMLKPRDEDPLIDSDDERPESFEDEFRRKEMRRGIDLATTLERIEKNFVITDPRLPDNPIIFASDSFLQLTEYNREEILGRNCRFLQGPETDRATVRKIRDAIDNQAEVTVQLINYTKSGKKFWNLFHLQPMRDQKGDVQYFIGVQLDGTEHVQDDAAKEGVVLVKKTADNIDEAAKELPDANLRPKDLWANHSKVVLPNPHMKDTASWRAIQKVLESGESIGLKHFRPVKPLGSGDTGSVHLVELLNTGEYFAMKAMDKSIMLNRNKVHRATAERQILDLLDHPFLPTLYASFQTKTHICLITDYCPGGELFVLLDNQPLKVLHEDAVRFYAAEVVVALEYLHCQGIIYRDLKPENILLHRDGHISLTDFDLSCLTSCRPQVFLPEDADEKKGRKNGSYPIFFAEPMRASNSFVGTEEYIAPEIITGAGHTSAVDWWALGILLYEMLYGYTPFRGKTRQRTFANILHKDIRFPASISVSLAARQLMYRLLHRDPANRLGSYEGANEIKGHPFFRGINWPLIRATAPPKLEIPLFSKDDMEKKGLVTNNRTDMF.

The segment covering 1–11 (MASKGTEGGHG) has biased composition (gly residues). Disordered regions lie at residues 1 to 59 (MASK…SPFL) and 88 to 118 (TGLP…QSAA). Residues 40–51 (SSASSFRTAAAA) show a composition bias toward low complexity. Polar residues predominate over residues 97–117 (RPSSGSARTSSEDNPQQQQSA). The 75-residue stretch at 123–197 (VSEELRAALS…KIRQSLANGS (75 aa)) folds into the PAS 1 domain. FMN is bound by residues 172 to 177 (NCRFLQ), Arg-190, Asn-205, Asn-215, and Gln-236. S-4a-FMN cysteine is present on Cys-173. One can recognise a PAC 1 domain in the interval 197–251 (SNYCGRILNYKKDGTPFWNLLTIAPIKDEDGRLLKFIGMQVEVSKYTEGKKDTVV). A compositionally biased stretch (polar residues) spans 286-295 (RSLSESSNNT). Disordered stretches follow at residues 286–345 (RSLS…QVNR) and 366–391 (EKNM…SFED). 2 stretches are compositionally biased toward basic and acidic residues: residues 312 to 321 (PSKRSSESGS) and 366 to 376 (EKNMLKPRDED). The PAS 2 domain maps to 400–473 (RGIDLATTLE…RKIRDAIDNQ (74 aa)). Residues 449–454 (NCRFLQ), Arg-467, Asn-482, Asn-492, and Gln-513 each bind FMN. The residue at position 450 (Cys-450) is an S-4a-FMN cysteine. Residues 474–528 (AEVTVQLINYTKSGKKFWNLFHLQPMRDQKGDVQYFIGVQLDGTEHVQDDAAKEG) form the PAC 2 domain. Residues 594–881 (FRPVKPLGSG…ANEIKGHPFF (288 aa)) enclose the Protein kinase domain. ATP is bound by residues 600 to 608 (LGSGDTGSV) and Lys-623. Asp-719 (proton acceptor) is an active-site residue.

This sequence belongs to the protein kinase superfamily. Ser/Thr protein kinase family. Homodimer. It depends on FMN as a cofactor. In terms of processing, autophosphorylated in response to blue light irradiation. 2 molecules of FMN bind covalently to cysteines after exposure to blue light and are reversed in the dark.

It carries out the reaction L-seryl-[protein] + ATP = O-phospho-L-seryl-[protein] + ADP + H(+). The catalysed reaction is L-threonyl-[protein] + ATP = O-phospho-L-threonyl-[protein] + ADP + H(+). Protein kinase that acts as a blue light photoreceptor in a signal-transduction pathway for phototropic responses. Regulates a wide range of physiological activities in plants that maximize the efficiency of photosynthesis, such as chloroplast relocations, stomata opening, and leaf expansion. The protein is Phototropin-1B (PHOT1B) of Oryza sativa subsp. japonica (Rice).